The sequence spans 152 residues: Deoxyuridine 5'-triphosphate nucleotidohydrolase (152 aa).

Substrate-binding positions include 71–73, Asn-84, 88–90, and Met-98; these read RSG and LID.

The protein belongs to the dUTPase family. Mg(2+) is required as a cofactor.

The enzyme catalyses dUTP + H2O = dUMP + diphosphate + H(+). It participates in pyrimidine metabolism; dUMP biosynthesis; dUMP from dCTP (dUTP route): step 2/2. Functionally, this enzyme is involved in nucleotide metabolism: it produces dUMP, the immediate precursor of thymidine nucleotides and it decreases the intracellular concentration of dUTP so that uracil cannot be incorporated into DNA. The polypeptide is Deoxyuridine 5'-triphosphate nucleotidohydrolase (Shigella flexneri).